A 45-amino-acid chain; its full sequence is Large ribosomal subunit protein bL34 (45 aa).

This sequence belongs to the bacterial ribosomal protein bL34 family.

The sequence is that of Large ribosomal subunit protein bL34 from Kineococcus radiotolerans (strain ATCC BAA-149 / DSM 14245 / SRS30216).